The following is a 343-amino-acid chain: Selenide, water dikinase (343 aa).

The active site involves cysteine 15. ATP is bound by residues lysine 18 and 46-48 (NKD). Aspartate 49 contributes to the Mg(2+) binding site. ATP is bound by residues aspartate 66, aspartate 89, and 137–139 (GHS). Residue aspartate 89 participates in Mg(2+) binding. A Mg(2+)-binding site is contributed by aspartate 225.

It belongs to the selenophosphate synthase 1 family. Class I subfamily. As to quaternary structure, homodimer. It depends on Mg(2+) as a cofactor.

It carries out the reaction hydrogenselenide + ATP + H2O = selenophosphate + AMP + phosphate + 2 H(+). Synthesizes selenophosphate from selenide and ATP. This Sulfurovum sp. (strain NBC37-1) protein is Selenide, water dikinase.